Consider the following 224-residue polypeptide: ATP phosphoribosyltransferase (224 aa).

The protein belongs to the ATP phosphoribosyltransferase family. Short subfamily. Heteromultimer composed of HisG and HisZ subunits.

It is found in the cytoplasm. It carries out the reaction 1-(5-phospho-beta-D-ribosyl)-ATP + diphosphate = 5-phospho-alpha-D-ribose 1-diphosphate + ATP. The protein operates within amino-acid biosynthesis; L-histidine biosynthesis; L-histidine from 5-phospho-alpha-D-ribose 1-diphosphate: step 1/9. Catalyzes the condensation of ATP and 5-phosphoribose 1-diphosphate to form N'-(5'-phosphoribosyl)-ATP (PR-ATP). Has a crucial role in the pathway because the rate of histidine biosynthesis seems to be controlled primarily by regulation of HisG enzymatic activity. This chain is ATP phosphoribosyltransferase, found in Cupriavidus pinatubonensis (strain JMP 134 / LMG 1197) (Cupriavidus necator (strain JMP 134)).